Here is a 389-residue protein sequence, read N- to C-terminus: Glutaryl-CoA dehydrogenase (389 aa).

2 residues coordinate substrate: arginine 87 and asparagine 91. Residues 126–129 (FGIT), serine 135, and 159–161 (WIS) each bind FAD. Position 135 (serine 135) interacts with substrate. Position 181 (serine 181) interacts with substrate. Residues arginine 271, 281 to 284 (FQMN), arginine 340, alanine 344, and 367 to 371 (EGSAN) each bind FAD. Glutamate 367 serves as the catalytic Proton acceptor. A substrate-binding site is contributed by arginine 385.

It belongs to the acyl-CoA dehydrogenase family. In terms of assembly, homotetramer. The cofactor is FAD.

It catalyses the reaction glutaryl-CoA + A = (2E)-glutaconyl-CoA + AH2. It participates in aromatic compound metabolism; benzoyl-CoA degradation. With respect to regulation, inhibited by glutaconyl-CoA. In terms of biological role, catalyzes the dehydrogenation of Glutaryl-CoA to glutaconyl-CoA. This is Glutaryl-CoA dehydrogenase (Acd) from Desulfococcus multivorans.